We begin with the raw amino-acid sequence, 520 residues long: Sodium-dependent dicarboxylate transporter SdcS (520 aa).

Transmembrane regions (helical) follow at residues alanine 30–phenylalanine 50, leucine 55–threonine 75, alanine 77–leucine 97, serine 104–methionine 124, serine 160–isoleucine 180, isoleucine 207–isoleucine 227, phenylalanine 242–leucine 262, lysine 298–leucine 318, valine 323–isoleucine 343, glutamate 362–serine 382, glycine 399–valine 419, methionine 428–methionine 448, alanine 452–phenylalanine 472, and leucine 491–isoleucine 511.

It belongs to the SLC13A/DASS transporter (TC 2.A.47) family. NADC subfamily.

It localises to the cell membrane. Functionally, mediates the transport of the dicarboxylates fumarate, malate, and succinate across the cytoplasmic membrane via a Na(+)-electrochemical gradient. This is Sodium-dependent dicarboxylate transporter SdcS (sdcS) from Staphylococcus aureus (strain USA300).